The primary structure comprises 159 residues: Phosphopantetheine adenylyltransferase (159 aa).

Residue Thr10 participates in substrate binding. Residues 10-11 and His18 each bind ATP; that span reads TF. Positions 42, 74, and 88 each coordinate substrate. ATP contacts are provided by residues 89–91, Glu99, and 124–130; these read GLR and WSFISSS.

It belongs to the bacterial CoaD family. In terms of assembly, homohexamer. The cofactor is Mg(2+).

The protein localises to the cytoplasm. It catalyses the reaction (R)-4'-phosphopantetheine + ATP + H(+) = 3'-dephospho-CoA + diphosphate. It participates in cofactor biosynthesis; coenzyme A biosynthesis; CoA from (R)-pantothenate: step 4/5. Reversibly transfers an adenylyl group from ATP to 4'-phosphopantetheine, yielding dephospho-CoA (dPCoA) and pyrophosphate. The protein is Phosphopantetheine adenylyltransferase of Cronobacter sakazakii (strain ATCC BAA-894) (Enterobacter sakazakii).